The primary structure comprises 309 residues: Uridylate-specific endoribonuclease C (309 aa).

An N-terminal signal peptide occupies residues 1–22 (MASGYDFGWIPVLLSLFTLTDA). Positions 27–303 (VNQELSNIFN…IGTAYPKLLS (277 aa)) constitute an EndoU domain. Residues Asn-53 and Asn-121 are each glycosylated (N-linked (GlcNAc...) asparagine). Catalysis depends on residues His-181, His-197, and Lys-242.

Belongs to the ENDOU family. As to quaternary structure, monomer. Mn(2+) is required as a cofactor.

It is found in the secreted. It carries out the reaction ribonucleotidyl-uridine-RNA = a 5'-end dephospho-uridine-RNA + a 3'-end 2',3'-cyclophospho-ribonucleotide-RNA. Functionally, endoribonuclease that cleaves single-stranded RNAs at 5' of uridylates and releases a product with a 2',3'-cyclic phosphate at the 3'-end. The UU and GU sites are more efficiently cleaved than CU and AU sites. The polypeptide is Uridylate-specific endoribonuclease C (endouc) (Danio rerio (Zebrafish)).